We begin with the raw amino-acid sequence, 138 residues long: MRTLWIVAVWLMGVEGHLYQFENMIYQKTGKFAIIAYSNYGCYCGWGGKGKPQDATDRCCFVHDCCYGRVNGCDPKMGTYSYSFQNGDIVCGGDDPCLRAVCECDRVAANCFAENLKTYNKKYWLSSIIDCKEESEKC.

The signal sequence occupies residues 1–16; it reads MRTLWIVAVWLMGVEG. Cystine bridges form between cysteine 42–cysteine 131, cysteine 44–cysteine 60, cysteine 59–cysteine 111, cysteine 65–cysteine 138, cysteine 66–cysteine 104, cysteine 73–cysteine 97, and cysteine 91–cysteine 102. 3 residues coordinate Ca(2+): tyrosine 43, glycine 45, and glycine 47. Residue histidine 63 is part of the active site. Aspartate 64 contacts Ca(2+). The active site involves aspartate 105.

The protein belongs to the phospholipase A2 family. Group II subfamily. It depends on Ca(2+) as a cofactor.

Its subcellular location is the secreted. It catalyses the reaction a 1,2-diacyl-sn-glycero-3-phosphocholine + H2O = a 1-acyl-sn-glycero-3-phosphocholine + a fatty acid + H(+). Functionally, PA2 catalyzes the calcium-dependent hydrolysis of the 2-acyl groups in 3-sn-phosphoglycerides. In Echis coloratus (Carpet viper), this protein is Phospholipase A2 EC3.